The primary structure comprises 957 residues: Glycine dehydrogenase (decarboxylating) (957 aa).

K708 carries the post-translational modification N6-(pyridoxal phosphate)lysine.

The protein belongs to the GcvP family. The glycine cleavage system is composed of four proteins: P, T, L and H. It depends on pyridoxal 5'-phosphate as a cofactor.

The catalysed reaction is N(6)-[(R)-lipoyl]-L-lysyl-[glycine-cleavage complex H protein] + glycine + H(+) = N(6)-[(R)-S(8)-aminomethyldihydrolipoyl]-L-lysyl-[glycine-cleavage complex H protein] + CO2. The glycine cleavage system catalyzes the degradation of glycine. The P protein binds the alpha-amino group of glycine through its pyridoxal phosphate cofactor; CO(2) is released and the remaining methylamine moiety is then transferred to the lipoamide cofactor of the H protein. This chain is Glycine dehydrogenase (decarboxylating), found in Escherichia coli O8 (strain IAI1).